The chain runs to 124 residues: MDSSKEPEPTGEFKCQLCGLTAPYTYYGQKPPNTHSIVILEDSYVMKDPFTPDKEKFLILGSLCSLCRRAVCVGAECSLFYTKRFCLPCVNENLQAFPLEIQEDMDKRKPQSKCLTRKKKDSRT.

The interval 105 to 124 (MDKRKPQSKCLTRKKKDSRT) is disordered. A compositionally biased stretch (basic residues) spans 115–124 (LTRKKKDSRT).

Belongs to the CDPF1 family.

In Gallus gallus (Chicken), this protein is Cysteine-rich DPF motif domain-containing protein 1 (CDPF1).